The primary structure comprises 812 residues: MEAFQELRKPSARLECDHCSFRGTDYENVQIHMGTIHPEFCDEMDAGGLGKMIFYQKSAKLFHCHKCFFTSKMYSNVYYHITSKHASPDKWNDKPKNQLNKETDPVKSPPLPEHQKIPCNSAEPKSIPALSMETQKLGSVLSPESPKPTPLTPLEPQKPGSVVSPELQTPLPSPEPSKPASVSSPEPPKSVPVCESQKLAPVPSPEPQKPAPVSPESVKATLSNPKPQKQSHFPETLGPPSASSPESPVLAASPEPWGPSPAASPESRKSARTTSPEPRKPSPSESPEPWKPFPAVSPEPRRPAPAVSPGSWKPGPPGSPRPWKSNPSASSGPWKPAKPAPSVSPGPWKPIPSVSPGPWKPTPSVSSASWKSSSVSPSSWKSPPASPESWKSGPPELRKTAPTLSPEHWKAVPPVSPELRKPGPPLSPEIRSPAGSPELRKPSGSPDLWKLSPDQRKTSPASLDFPESQKSSRGGSPDLWKSSFFIEPQKPVFPETRKPGPSGPSESPKAASDIWKPVLSIDTEPRKPALFPEPAKTAPPASPEARKRALFPEPRKHALFPELPKSALFSESQKAVELGDELQIDAIDDQKCDILVQEELLASPKKLLEDTLFPSSKKLKKDNQESSDAELSSSEYIKTDLDAMDIKGQESSSDQEQVDVESIDFSKENKMDMTSPEQSRNVLQFTEEKEAFISEEEIAKYMKRGKGKYYCKICCCRAMKKGAVLHHLVNKHNVHSPYKCTICGKAFLLESLLKNHVAAHGQSLLKCPRCNFESNFPRGFKKHLTHCQSRHNEEANKKLMEALEPPLEEQQI.

Met1 carries the N-acetylmethionine modification. Over residues 86–105 (ASPDKWNDKPKNQLNKETDP) the composition is skewed to basic and acidic residues. Disordered regions lie at residues 86-124 (ASPD…SAEP) and 136-546 (KLGS…PEAR). Phosphoserine occurs at positions 87, 108, 173, 184, 204, 214, and 217. Pro residues predominate over residues 202–213 (VPSPEPQKPAPV). Over residues 220–233 (ATLSNPKPQKQSHF) the composition is skewed to polar residues. A phosphoserine mark is found at Ser244, Ser247, Ser253, Ser264, Ser275, Ser282, Ser286, Ser297, Ser308, Ser319, Ser344, Ser355, Ser376, Ser382, and Ser386. Residues 271-490 (ARTTSPEPRK…KSSFFIEPQK (220 aa)) form a mediates interaction with MAD2L2 region. A compositionally biased stretch (pro residues) spans 284-297 (SESPEPWKPFPAVS). The segment covering 336-361 (PAKPAPSVSPGPWKPIPSVSPGPWKP) has biased composition (pro residues). Over residues 363–392 (PSVSSASWKSSSVSPSSWKSPPASPESWKS) the composition is skewed to low complexity. Position 403 is a phosphothreonine (Thr403). Phosphoserine occurs at positions 405, 416, 427, 432, 436, 443, 445, and 452. The mediates localization to the spindle and the kinetochore and is required for the attachment of spindle microtubules to the kinetochore stretch occupies residues 451-590 (LSPDQRKTSP…ELQIDAIDDQ (140 aa)). Thr458 is modified (phosphothreonine). A phosphoserine mark is found at Ser459, Ser462, Ser472, and Ser476. An N6-acetyllysine; alternate modification is found at Lys490. Residue Lys490 forms a Glycyl lysine isopeptide (Lys-Gly) (interchain with G-Cter in SUMO2); alternate linkage. Over residues 499–512 (PGPSGPSESPKAAS) the composition is skewed to low complexity. Residues Ser507, Ser512, and Ser542 each carry the phosphoserine modification. A Glycyl lysine isopeptide (Lys-Gly) (interchain with G-Cter in SUMO2) cross-link involves residue Lys565. A phosphoserine mark is found at Ser572 and Ser603. The segment at 591–812 (KCDILVQEEL…LEPPLEEQQI (222 aa)) is mediates localization to the chromosome and the spindle and negatively regulates chromosome alignment. Lys606 is covalently cross-linked (Glycyl lysine isopeptide (Lys-Gly) (interchain with G-Cter in SUMO2)). 4 positions are modified to phosphoserine: Ser615, Ser626, Ser627, and Ser632. A Glycyl lysine isopeptide (Lys-Gly) (interchain with G-Cter in SUMO2) cross-link involves residue Lys638. Ser651, Ser652, and Ser653 each carry phosphoserine. Lys670 is covalently cross-linked (Glycyl lysine isopeptide (Lys-Gly) (interchain with G-Cter in SUMO2)). Ser675 carries the phosphoserine modification. Residue Lys689 forms a Glycyl lysine isopeptide (Lys-Gly) (interchain with G-Cter in SUMO2) linkage. Position 736 is a phosphoserine (Ser736). Residues 738–760 (YKCTICGKAFLLESLLKNHVAAH) form a C2H2-type zinc finger.

In terms of assembly, interacts with MAD2L2. Interacts with POGZ, CBX1, CBX3 and CBX5. In terms of processing, phosphorylated by CDK1. Mitotic phosphorylation is required for the attachment of spindle microtubules to the kinetochore.

It is found in the nucleus. The protein localises to the chromosome. The protein resides in the centromere. Its subcellular location is the kinetochore. It localises to the cytoplasm. It is found in the cytoskeleton. The protein localises to the spindle. Functionally, required for proper alignment of chromosomes at metaphase and their accurate segregation during mitosis. Involved in the maintenance of spindle microtubules attachment to the kinetochore during sister chromatid biorientation. May recruit CENPE and CENPF to the kinetochore. This is Chromosome alignment-maintaining phosphoprotein 1 (CHAMP1) from Homo sapiens (Human).